The sequence spans 158 residues: Protein Smg homolog (158 aa).

The protein belongs to the Smg family.

This is Protein Smg homolog from Coxiella burnetii (strain RSA 331 / Henzerling II).